Consider the following 580-residue polypeptide: 2-succinyl-5-enolpyruvyl-6-hydroxy-3-cyclohexene-1-carboxylate synthase (580 aa).

It belongs to the TPP enzyme family. MenD subfamily. Homodimer. It depends on Mg(2+) as a cofactor. Mn(2+) is required as a cofactor. Thiamine diphosphate serves as cofactor.

It carries out the reaction isochorismate + 2-oxoglutarate + H(+) = 5-enolpyruvoyl-6-hydroxy-2-succinyl-cyclohex-3-ene-1-carboxylate + CO2. It functions in the pathway quinol/quinone metabolism; 1,4-dihydroxy-2-naphthoate biosynthesis; 1,4-dihydroxy-2-naphthoate from chorismate: step 2/7. It participates in quinol/quinone metabolism; menaquinone biosynthesis. Its function is as follows. Catalyzes the thiamine diphosphate-dependent decarboxylation of 2-oxoglutarate and the subsequent addition of the resulting succinic semialdehyde-thiamine pyrophosphate anion to isochorismate to yield 2-succinyl-5-enolpyruvyl-6-hydroxy-3-cyclohexene-1-carboxylate (SEPHCHC). The sequence is that of 2-succinyl-5-enolpyruvyl-6-hydroxy-3-cyclohexene-1-carboxylate synthase from Bacillus pumilus (strain SAFR-032).